We begin with the raw amino-acid sequence, 493 residues long: Envelope glycoprotein gp63 (493 aa).

A signal peptide spans 1-22 (MGKSGLYFSLICFYTLFPSSFG). The Extracellular portion of the chain corresponds to 23–446 (NPSRCTLFIG…GLSQWAREAL (424 aa)). Residues asparagine 140 and asparagine 222 are each glycosylated (N-linked (GlcNAc...) asparagine; by host). The CXXC motif lies at 225–228 (CMVC). Disulfide bonds link cysteine 225-cysteine 228, cysteine 225-cysteine 404, and cysteine 396-cysteine 403. Asparagine 292 carries N-linked (GlcNAc...) asparagine; by host glycosylation. The interval 316–336 (AVPIAIWLVSALAAGTGIAGG) is fusion peptide. 2 coiled-coil regions span residues 344–390 (ASSK…LLFW) and 400–432 (QEQC…GWGL). The interval 379 to 395 (AQNRRGLDLLFWEQGGL) is immunosuppression. The short motif at 396 to 404 (CKAIQEQCC) is the CX6CC element. Asparagine 407 carries an N-linked (GlcNAc...) asparagine; by host glycan. The helical transmembrane segment at 447 to 467 (QTGITLLALFLLLIVVGPCVI) threads the bilayer. Cysteine 465 carries S-palmitoyl cysteine; by host lipidation. The Cytoplasmic portion of the chain corresponds to 468–493 (RQLQTLPSRLQHRSQPYSLLNYETNL).

In terms of assembly, the mature envelope protein (Env) consists of a trimer of SU-TM heterodimers attached by a labile interchain disulfide bond. Post-translationally, specific enzymatic cleavages in vivo yield mature proteins. Envelope glycoproteins are synthesized as an inactive precursor that is N-glycosylated and processed likely by host cell furin or by a furin-like protease in the Golgi to yield the mature SU and TM proteins. The cleavage site between SU and TM requires the minimal sequence [KR]-X-[KR]-R. The CXXC motif is highly conserved across a broad range of retroviral envelope proteins. It is thought to participate in the formation of a labile disulfide bond possibly with the CX6CC motif present in the transmembrane protein. Isomerization of the intersubunit disulfide bond to an SU intrachain disulfide bond is thought to occur upon receptor recognition in order to allow membrane fusion. In terms of processing, the transmembrane protein is palmitoylated.

It localises to the virion membrane. The protein localises to the host cell membrane. In terms of biological role, the surface protein (SU) attaches the virus to the host cell by binding to its receptor. This interaction triggers the refolding of the transmembrane protein (TM) and is thought to activate its fusogenic potential by unmasking its fusion peptide. Fusion occurs at the host cell plasma membrane. The transmembrane protein (TM) acts as a class I viral fusion protein. Under the current model, the protein has at least 3 conformational states: pre-fusion native state, pre-hairpin intermediate state, and post-fusion hairpin state. During viral and target cell membrane fusion, the coiled coil regions (heptad repeats) assume a trimer-of-hairpins structure, positioning the fusion peptide in close proximity to the C-terminal region of the ectodomain. The formation of this structure appears to drive apposition and subsequent fusion of viral and target cell membranes. Membranes fusion leads to delivery of the nucleocapsid into the cytoplasm. The chain is Envelope glycoprotein gp63 (env) from Human T-cell leukemia virus 3 (strain Pyl43) (HTLV-3).